A 148-amino-acid polypeptide reads, in one-letter code: MNHIKWLSDLKKAGLLALGKGVITLLKRFSLVIVTLMMSIVVVLAAAKESPGDHVISFDEPIILMISIGIVVFLLIPPLVMSFFGNLVVRIISGVYQCFIVFTFLGLIPIGFLIPNGFLTILVSIAGTLVSIASVAVTLCIGKNKKDI.

4 consecutive transmembrane segments (helical) span residues 29-49, 61-81, 99-119, and 121-141; these read FSLVIVTLMMSIVVVLAAAKE, PIILMISIGIVVFLLIPPLVM, FIVFTFLGLIPIGFLIPNGFL, and ILVSIAGTLVSIASVAVTLCI.

The protein localises to the cell membrane. This is an uncharacterized protein from Bacillus subtilis (strain 168).